Reading from the N-terminus, the 201-residue chain is Large ribosomal subunit protein bL25 (201 aa).

The disordered stretch occupies residues 179 to 201; the sequence is VSITAPRVEAEKTEEEEPESTEE. Residues 190 to 201 show a composition bias toward acidic residues; that stretch reads KTEEEEPESTEE.

This sequence belongs to the bacterial ribosomal protein bL25 family. CTC subfamily. Part of the 50S ribosomal subunit; part of the 5S rRNA/L5/L18/L25 subcomplex. Contacts the 5S rRNA. Binds to the 5S rRNA independently of L5 and L18.

Its function is as follows. This is one of the proteins that binds to the 5S RNA in the ribosome where it forms part of the central protuberance. This Prosthecochloris aestuarii (strain DSM 271 / SK 413) protein is Large ribosomal subunit protein bL25.